The chain runs to 228 residues: 2-hydroxy-3-keto-5-methylthiopentenyl-1-phosphate phosphatase (228 aa).

Belongs to the HAD-like hydrolase superfamily. MtnX family.

The catalysed reaction is 2-hydroxy-5-methylsulfanyl-3-oxopent-1-enyl phosphate + H2O = 1,2-dihydroxy-5-(methylsulfanyl)pent-1-en-3-one + phosphate. The protein operates within amino-acid biosynthesis; L-methionine biosynthesis via salvage pathway; L-methionine from S-methyl-5-thio-alpha-D-ribose 1-phosphate: step 4/6. Its function is as follows. Dephosphorylates 2-hydroxy-3-keto-5-methylthiopentenyl-1-phosphate (HK-MTPenyl-1-P) yielding 1,2-dihydroxy-3-keto-5-methylthiopentene (DHK-MTPene). In Lysinibacillus sphaericus (strain C3-41), this protein is 2-hydroxy-3-keto-5-methylthiopentenyl-1-phosphate phosphatase.